The primary structure comprises 416 residues: Transcription factor caaR (416 aa).

The zn(2)-C6 fungal-type DNA-binding region spans 13-44; sequence CDRCYAQKLRCPRPSTNDDASCIRCLRQKVQC. Disordered regions lie at residues 68-90 and 130-150; these read ATAG…SDTA and QPPP…GLDN. Residues 130–141 are compositionally biased toward pro residues; the sequence is QPPPLDTTPPPR. 2 helical membrane passes run 249-269 and 302-322; these read VIYH…ATLL and SAPS…TYFL.

The protein resides in the membrane. The protein localises to the nucleus. In terms of biological role, transcription factor that positively regulates the expression of the gene cluster that mediates the biosynthesis of the acyltetronic acid derivatives carlosic acid, agglomerin F and carlosic acid methyl ether. The protein is Transcription factor caaR of Aspergillus niger (strain ATCC MYA-4892 / CBS 513.88 / FGSC A1513).